The sequence spans 135 residues: Small ribosomal subunit protein uS8 (135 aa).

It belongs to the universal ribosomal protein uS8 family. In terms of assembly, part of the 30S ribosomal subunit. Contacts proteins S5 and S12.

One of the primary rRNA binding proteins, it binds directly to 16S rRNA central domain where it helps coordinate assembly of the platform of the 30S subunit. The chain is Small ribosomal subunit protein uS8 from Corynebacterium urealyticum (strain ATCC 43042 / DSM 7109).